Reading from the N-terminus, the 252-residue chain is dITP/XTP pyrophosphatase (252 aa).

Substrate is bound at residue 7-12; it reads THNEGK. Aspartate 74 serves as the catalytic Proton acceptor. Aspartate 74 provides a ligand contact to Mg(2+). Residues serine 75 and 193-196 each bind substrate; that span reads FGYD. The disordered stretch occupies residues 202-229; it reads DDQPAGRVSTEPDHEGEPLTSAEMTPAE. Residues lysine 230 and 235–236 contribute to the substrate site; that span reads HR.

Belongs to the HAM1 NTPase family. As to quaternary structure, homodimer. Mg(2+) serves as cofactor.

It catalyses the reaction XTP + H2O = XMP + diphosphate + H(+). The catalysed reaction is dITP + H2O = dIMP + diphosphate + H(+). The enzyme catalyses ITP + H2O = IMP + diphosphate + H(+). Functionally, pyrophosphatase that catalyzes the hydrolysis of nucleoside triphosphates to their monophosphate derivatives, with a high preference for the non-canonical purine nucleotides XTP (xanthosine triphosphate), dITP (deoxyinosine triphosphate) and ITP. Seems to function as a house-cleaning enzyme that removes non-canonical purine nucleotides from the nucleotide pool, thus preventing their incorporation into DNA/RNA and avoiding chromosomal lesions. The polypeptide is dITP/XTP pyrophosphatase (Bifidobacterium longum (strain NCC 2705)).